The sequence spans 308 residues: Baculoviral IAP repeat-containing protein bir-2 (308 aa).

2 BIR repeats span residues 27 to 98 and 170 to 241; these read RFAS…EFVM and RLAT…DFIK. Zn(2+)-binding residues include Cys68, Cys71, His87, Cys94, Cys211, Cys214, His230, and Cys237.

This sequence belongs to the IAP family.

The chain is Baculoviral IAP repeat-containing protein bir-2 from Caenorhabditis elegans.